Here is a 44-residue protein sequence, read N- to C-terminus: Photosystem I reaction center subunit IX (44 aa).

Residues 7 to 27 form a helical membrane-spanning segment; the sequence is YLSVAPVLATLWFGSLAGLLI.

It belongs to the PsaJ family.

It is found in the plastid. It localises to the chloroplast thylakoid membrane. Functionally, may help in the organization of the PsaE and PsaF subunits. This Piper cenocladum (Ant piper) protein is Photosystem I reaction center subunit IX.